The sequence spans 64 residues: Cold shock protein CapA (64 aa).

In terms of domain architecture, CSD spans Gly7–Ala64.

It localises to the cytoplasm. Affects cell viability at low temperatures. This chain is Cold shock protein CapA (capA), found in Pseudomonas fragi.